We begin with the raw amino-acid sequence, 327 residues long: Interleukin-12 subunit beta (327 aa).

The first 22 residues, 1 to 22, serve as a signal peptide directing secretion; sequence MCHQKLTISWFAMVLLVSPLMA. Residues 23–106 enclose the Ig-like C2-type domain; sequence IWELEKDVYV…LSHSRLLLHK (84 aa). Cys50 and Cys90 form a disulfide bridge. N-linked (GlcNAc...) asparagine glycans are attached at residues Asn125, Asn135, Asn223, and Asn315. The Fibronectin type-III domain occupies 238-327; it reads PPKNLQLKPL…WSEWASVSCN (90 aa).

This sequence belongs to the IL-12B family. Heterodimer with IL12A; disulfide-linked. The heterodimer is known as interleukin IL-12. Heterodimer with IL23A; disulfide-linked. The heterodimer is known as interleukin IL-23. Also secreted as a monomer. Interacts with NBR1; this interaction promotes IL-12 secretion.

Its subcellular location is the secreted. Cytokine that can act as a growth factor for activated T and NK cells, enhance the lytic activity of NK/lymphokine-activated killer cells, and stimulate the production of IFN-gamma by resting PBMC. Functionally, associates with IL23A to form the IL-23 interleukin, a heterodimeric cytokine which functions in innate and adaptive immunity. IL-23 may constitute with IL-17 an acute response to infection in peripheral tissues. IL-23 binds to a heterodimeric receptor complex composed of IL12RB1 and IL23R, activates the Jak-Stat signaling cascade, stimulates memory rather than naive T-cells and promotes production of pro-inflammatory cytokines. IL-23 induces autoimmune inflammation and thus may be responsible for autoimmune inflammatory diseases and may be important for tumorigenesis. The chain is Interleukin-12 subunit beta (IL12B) from Sigmodon hispidus (Hispid cotton rat).